The chain runs to 450 residues: Oxygen-independent coproporphyrinogen III oxidase (450 aa).

The Radical SAM core domain occupies 45 to 282 (IPAGGSISLY…RTLILWDGYQ (238 aa)). Y54 lines the S-adenosyl-L-methionine pocket. Residues C60 and C64 each coordinate [4Fe-4S] cluster. An S-adenosyl-L-methionine-binding site is contributed by F66. C67 lines the [4Fe-4S] cluster pocket. S-adenosyl-L-methionine-binding positions include G111, 112–113 (GT), E144, Q171, R183, D208, A242, and I328.

Belongs to the anaerobic coproporphyrinogen-III oxidase family. As to quaternary structure, monomer. [4Fe-4S] cluster serves as cofactor.

The protein localises to the cytoplasm. It catalyses the reaction coproporphyrinogen III + 2 S-adenosyl-L-methionine = protoporphyrinogen IX + 2 5'-deoxyadenosine + 2 L-methionine + 2 CO2. It functions in the pathway porphyrin-containing compound metabolism; protoporphyrin-IX biosynthesis; protoporphyrinogen-IX from coproporphyrinogen-III (AdoMet route): step 1/1. In terms of biological role, involved in the heme and chlorophyll biosynthesis. Catalyzes the anaerobic oxidative decarboxylation of propionate groups of rings A and B of coproporphyrinogen III to yield the vinyl groups in protoporphyrinogen IX. This chain is Oxygen-independent coproporphyrinogen III oxidase (hemZ), found in Cereibacter sphaeroides (strain ATCC 17023 / DSM 158 / JCM 6121 / CCUG 31486 / LMG 2827 / NBRC 12203 / NCIMB 8253 / ATH 2.4.1.) (Rhodobacter sphaeroides).